A 420-amino-acid chain; its full sequence is UDP-glucuronic acid decarboxylase 1 (420 aa).

An N-acetylmethionine modification is found at methionine 1. Residues 1–19 (MVSKGLLRLVSSVNRRKMK) lie on the Cytoplasmic side of the membrane. Residues 20-40 (LLLGIALFAYAASVWGNFVNM) form a helical; Signal-anchor for type II membrane protein membrane-spanning segment. The Lumenal portion of the chain corresponds to 41–420 (RSIQENGELK…RVKKGRTRHS (380 aa)). Phosphothreonine is present on threonine 94. NAD(+) is bound by residues glycine 98, phenylalanine 99, valine 100, aspartate 119, asparagine 120, phenylalanine 122, threonine 123, glycine 124, aspartate 144, and valine 145. Residues leucine 149 and tyrosine 150 each coordinate UDP-alpha-D-glucuronate. NAD(+)-binding residues include leucine 159 and serine 161. Lysine 177 contributes to the UDP-alpha-D-glucuronate binding site. Threonine 178 serves as a coordination point for NAD(+). Residues asparagine 185, glycine 188, lysine 191, and arginine 192 each contribute to the UDP-alpha-D-glucuronate site. NAD(+)-binding residues include alanine 200, tyrosine 231, and lysine 235. Tyrosine 231 serves as the catalytic Proton acceptor. UDP-alpha-D-glucuronate is bound by residues tyrosine 245, glutamine 248, and glutamate 249. Residues threonine 261, histidine 267, and arginine 272 each coordinate NAD(+). A glycan (N-linked (GlcNAc...) asparagine) is linked at asparagine 316.

Belongs to the NAD(P)-dependent epimerase/dehydratase family. UDP-glucuronic acid decarboxylase subfamily. As to quaternary structure, homodimer and homotetramer. Interacts with AKT1. It depends on NAD(+) as a cofactor. As to expression, ubiquitous. Detected in heart, brain, spleen, lung, testis, liver, skeletal muscle and kidney.

The protein localises to the golgi apparatus. Its subcellular location is the golgi stack membrane. The catalysed reaction is UDP-alpha-D-glucuronate + H(+) = UDP-alpha-D-xylose + CO2. It functions in the pathway nucleotide-sugar biosynthesis; UDP-alpha-D-xylose biosynthesis; UDP-alpha-D-xylose from UDP-alpha-D-glucuronate: step 1/1. Its function is as follows. Catalyzes the NAD-dependent decarboxylation of UDP-glucuronic acid to UDP-xylose. Necessary for the biosynthesis of the core tetrasaccharide in glycosaminoglycan biosynthesis. The protein is UDP-glucuronic acid decarboxylase 1 of Rattus norvegicus (Rat).